We begin with the raw amino-acid sequence, 250 residues long: 5-oxoprolinase subunit A (250 aa).

Belongs to the LamB/PxpA family. Forms a complex composed of PxpA, PxpB and PxpC.

It catalyses the reaction 5-oxo-L-proline + ATP + 2 H2O = L-glutamate + ADP + phosphate + H(+). Its function is as follows. Catalyzes the cleavage of 5-oxoproline to form L-glutamate coupled to the hydrolysis of ATP to ADP and inorganic phosphate. In Paraburkholderia phymatum (strain DSM 17167 / CIP 108236 / LMG 21445 / STM815) (Burkholderia phymatum), this protein is 5-oxoprolinase subunit A.